A 341-amino-acid chain; its full sequence is Ribose-phosphate pyrophosphokinase 5 (341 aa).

Mg(2+)-binding residues include D152, H154, and D167.

Belongs to the ribose-phosphate pyrophosphokinase family.

It localises to the cytoplasm. The catalysed reaction is D-ribose 5-phosphate + ATP = 5-phospho-alpha-D-ribose 1-diphosphate + AMP + H(+). It participates in metabolic intermediate biosynthesis; 5-phospho-alpha-D-ribose 1-diphosphate biosynthesis; 5-phospho-alpha-D-ribose 1-diphosphate from D-ribose 5-phosphate (route I): step 1/1. Functionally, 5-phosphoribose 1-diphosphate synthase involved in nucleotide, histidine, and tryptophan biosynthesis. Active in heteromultimeric complexes with other 5-phosphoribose 1-diphosphate synthases. This chain is Ribose-phosphate pyrophosphokinase 5, found in Schizosaccharomyces pombe (strain 972 / ATCC 24843) (Fission yeast).